Here is a 413-residue protein sequence, read N- to C-terminus: Na(+)-translocating NADH-quinone reductase subunit B (413 aa).

Helical transmembrane passes span 56–76 (MMILVWFAVFPAMFWGMYNVG), 123–143 (LLGAAYFLPIYAVVFLVGGFW), and 169–189 (IVPPTLPLWQAALGISFGVVI). T236 carries the post-translational modification FMN phosphoryl threonine. The next 5 membrane-spanning stretches (helical) occupy residues 270-290 (GSIGEVSTLMILIGGAIIIFG), 297-317 (IVAGVMIGMIATAYLFNWIGS), 322-342 (LFAMPWYWHLVLGGFAFGMIF), 358-378 (WWYGGLIGVMCILIRVANPAY), and 381-401 (GMMLAILFANLFAPLFDYVVV).

It belongs to the NqrB/RnfD family. As to quaternary structure, composed of six subunits; NqrA, NqrB, NqrC, NqrD, NqrE and NqrF. FMN serves as cofactor.

The protein resides in the cell inner membrane. The catalysed reaction is a ubiquinone + n Na(+)(in) + NADH + H(+) = a ubiquinol + n Na(+)(out) + NAD(+). NQR complex catalyzes the reduction of ubiquinone-1 to ubiquinol by two successive reactions, coupled with the transport of Na(+) ions from the cytoplasm to the periplasm. NqrA to NqrE are probably involved in the second step, the conversion of ubisemiquinone to ubiquinol. The polypeptide is Na(+)-translocating NADH-quinone reductase subunit B (Yersinia pestis).